Reading from the N-terminus, the 490-residue chain is Glutamyl-tRNA(Gln) amidotransferase subunit A (490 aa).

Residues Lys79 and Ser154 each act as charge relay system in the active site. Ser178 acts as the Acyl-ester intermediate in catalysis.

It belongs to the amidase family. GatA subfamily. Heterotrimer of A, B and C subunits.

The enzyme catalyses L-glutamyl-tRNA(Gln) + L-glutamine + ATP + H2O = L-glutaminyl-tRNA(Gln) + L-glutamate + ADP + phosphate + H(+). In terms of biological role, allows the formation of correctly charged Gln-tRNA(Gln) through the transamidation of misacylated Glu-tRNA(Gln) in organisms which lack glutaminyl-tRNA synthetase. The reaction takes place in the presence of glutamine and ATP through an activated gamma-phospho-Glu-tRNA(Gln). This chain is Glutamyl-tRNA(Gln) amidotransferase subunit A, found in Roseiflexus castenholzii (strain DSM 13941 / HLO8).